We begin with the raw amino-acid sequence, 208 residues long: N-(5'-phosphoribosyl)anthranilate isomerase (208 aa).

Belongs to the TrpF family.

It carries out the reaction N-(5-phospho-beta-D-ribosyl)anthranilate = 1-(2-carboxyphenylamino)-1-deoxy-D-ribulose 5-phosphate. It functions in the pathway amino-acid biosynthesis; L-tryptophan biosynthesis; L-tryptophan from chorismate: step 3/5. This is N-(5'-phosphoribosyl)anthranilate isomerase from Neisseria gonorrhoeae (strain ATCC 700825 / FA 1090).